Reading from the N-terminus, the 402-residue chain is 1-deoxy-D-xylulose 5-phosphate reductoisomerase (402 aa).

Residues T21, G22, S23, I24, G47, N50, and N127 each contribute to the NADPH site. K128 lines the 1-deoxy-D-xylulose 5-phosphate pocket. Residue E129 coordinates NADPH. Residue D151 participates in Mn(2+) binding. 1-deoxy-D-xylulose 5-phosphate is bound by residues S152, E153, S177, and H200. A Mn(2+)-binding site is contributed by E153. Residue G206 participates in NADPH binding. 1-deoxy-D-xylulose 5-phosphate is bound by residues S213, N218, K219, and E222. E222 provides a ligand contact to Mn(2+).

The protein belongs to the DXR family. Mg(2+) is required as a cofactor. Requires Mn(2+) as cofactor.

The catalysed reaction is 2-C-methyl-D-erythritol 4-phosphate + NADP(+) = 1-deoxy-D-xylulose 5-phosphate + NADPH + H(+). It participates in isoprenoid biosynthesis; isopentenyl diphosphate biosynthesis via DXP pathway; isopentenyl diphosphate from 1-deoxy-D-xylulose 5-phosphate: step 1/6. Its function is as follows. Catalyzes the NADPH-dependent rearrangement and reduction of 1-deoxy-D-xylulose-5-phosphate (DXP) to 2-C-methyl-D-erythritol 4-phosphate (MEP). This is 1-deoxy-D-xylulose 5-phosphate reductoisomerase from Mycobacterium ulcerans (strain Agy99).